The chain runs to 275 residues: Uroplakin-3b (275 aa).

An N-terminal signal peptide occupies residues Met1–Ser26. Topologically, residues Leu27–Cys196 are lumenal. A glycan (N-linked (GlcNAc...) asparagine) is linked at Asn77. A helical membrane pass occupies residues Met197–Ala217. The Cytoplasmic segment spans residues Ala218–Pro275.

The protein belongs to the uroplakin-3 family. As to quaternary structure, heterodimer with uroplakin-1B (UPK1B). In terms of tissue distribution, expression is urothelium-specific.

It localises to the cell membrane. Component of the asymmetric unit membrane (AUM); a highly specialized biomembrane elaborated by terminally differentiated urothelial cells. May play an important role in AUM-cytoskeleton interaction in terminally differentiated urothelial cells. It also contributes to the formation of urothelial glycocalyx which may play an important role in preventing bacterial adherence. The polypeptide is Uroplakin-3b (Upk3b) (Mus musculus (Mouse)).